A 192-amino-acid polypeptide reads, in one-letter code: NADH dehydrogenase [ubiquinone] iron-sulfur protein 3 (192 aa).

This sequence belongs to the complex I 30 kDa subunit family. Complex I is composed of about 45 different subunits. This is a component of the iron-sulfur (IP) fragment of the enzyme.

The protein localises to the mitochondrion inner membrane. It catalyses the reaction a ubiquinone + NADH + 5 H(+)(in) = a ubiquinol + NAD(+) + 4 H(+)(out). Its function is as follows. Core subunit of the mitochondrial membrane respiratory chain NADH dehydrogenase (Complex I) that is believed to belong to the minimal assembly required for catalysis. Complex I functions in the transfer of electrons from NADH to the respiratory chain. The immediate electron acceptor for the enzyme is believed to be ubiquinone. This is NADH dehydrogenase [ubiquinone] iron-sulfur protein 3 (NAD9) from Beta trigyna (Caucasian wild beet).